The primary structure comprises 133 residues: Large ribosomal subunit protein bL17 (133 aa).

It belongs to the bacterial ribosomal protein bL17 family. As to quaternary structure, part of the 50S ribosomal subunit. Contacts protein L32.

The chain is Large ribosomal subunit protein bL17 from Verminephrobacter eiseniae (strain EF01-2).